Reading from the N-terminus, the 348-residue chain is Anthranilate phosphoribosyltransferase (348 aa).

5-phospho-alpha-D-ribose 1-diphosphate-binding positions include Gly91, Gly94 to Asp95, Thr99, Asn101 to Thr104, Lys119 to Gly127, and Ser131. Gly91 contributes to the anthranilate binding site. Ser103 lines the Mg(2+) pocket. An anthranilate-binding site is contributed by Asn122. Position 177 (Arg177) interacts with anthranilate. Positions 236 and 237 each coordinate Mg(2+).

It belongs to the anthranilate phosphoribosyltransferase family. Homodimer. The cofactor is Mg(2+).

It carries out the reaction N-(5-phospho-beta-D-ribosyl)anthranilate + diphosphate = 5-phospho-alpha-D-ribose 1-diphosphate + anthranilate. Its pathway is amino-acid biosynthesis; L-tryptophan biosynthesis; L-tryptophan from chorismate: step 2/5. Its function is as follows. Catalyzes the transfer of the phosphoribosyl group of 5-phosphorylribose-1-pyrophosphate (PRPP) to anthranilate to yield N-(5'-phosphoribosyl)-anthranilate (PRA). The chain is Anthranilate phosphoribosyltransferase from Synechococcus elongatus (strain ATCC 33912 / PCC 7942 / FACHB-805) (Anacystis nidulans R2).